A 117-amino-acid chain; its full sequence is Putative membrane protein insertion efficiency factor (117 aa).

Belongs to the UPF0161 family.

The protein localises to the cell inner membrane. Its function is as follows. Could be involved in insertion of integral membrane proteins into the membrane. This Bartonella bacilliformis (strain ATCC 35685 / KC583 / Herrer 020/F12,63) protein is Putative membrane protein insertion efficiency factor.